Reading from the N-terminus, the 974-residue chain is ATP-dependent RNA helicase DBP7 (974 aa).

Positions 1 to 135 are disordered; it reads MDDNDDGLML…SSAASSSRKA (135 aa). Residues 13 to 24 are compositionally biased toward low complexity; that stretch reads AAPAAGSASVSS. The span at 25–48 shows a compositional bias: basic residues; that stretch reads KRSKQTAKARFAQKRTAHQLRKQA. 3 stretches are compositionally biased toward low complexity: residues 67 to 85, 92 to 102, and 118 to 133; these read PASA…SPAA, ATSTSSAALSA, and TSRS…SSSR. Residues 200–230 carry the Q motif motif; sequence SDFASCGLDPLLVYHLASKMNIGSNPTAIQK. A Helicase ATP-binding domain is found at 236-477; that stretch reads LLHPGLDRDI…GKTLVNPKII (242 aa). An ATP-binding site is contributed by 249 to 256; that stretch reads AQTGSGKT. Residues 381–384 carry the DEAD box motif; it reads DEAD. The Helicase C-terminal domain maps to 531 to 747; the sequence is LLRSYISRAR…TRKITPASIE (217 aa). A disordered region spans residues 836 to 887; sequence KSSAIGASSTPASSHETTNKKRMRIAPDTAESDSSSDSSDDAGSDYESHSNK. Polar residues predominate over residues 840 to 851; sequence IGASSTPASSHE.

This sequence belongs to the DEAD box helicase family. DDX31/DBP7 subfamily.

It localises to the nucleus. The protein localises to the nucleolus. The enzyme catalyses ATP + H2O = ADP + phosphate + H(+). Functionally, ATP-binding RNA helicase involved in the biogenesis of 60S ribosomal subunits and is required for the normal formation of 25S and 5.8S rRNAs. This Mycosarcoma maydis (Corn smut fungus) protein is ATP-dependent RNA helicase DBP7 (DBP7).